Reading from the N-terminus, the 285-residue chain is Short chain dehydrogenase sol3 (285 aa).

NADP(+) is bound by residues Leu39, Lys64, and Asp87. Catalysis depends on proton donor residues Ser168 and Tyr200. NADP(+)-binding residues include Tyr200, Lys204, and Ser234. The active-site Lowers pKa of active site Tyr is the Lys204.

This sequence belongs to the short-chain dehydrogenases/reductases (SDR) family.

It participates in phytotoxin biosynthesis. Short chain dehydrogenase; part of the gene cluster that mediates the biosynthesis of the phytotoxin solanapyrone, a causal agent of early blight disease of potato and tomato. The prosolanapyrone synthase sol1 is a polyketide synthase that produces the octaketide desmethylprosolanapyrone I via sequential condensations of 7 malonyl-CoA units with one acetyl-CoA unit, and one methylation step. The octaketide backbone is further methylated by the sol2 O-methyltransferase to yield prosolanapyrone I. Prosolanapyrone I is hydroxylated to prosolanapyrone II by the cytochrome P450 monooxygenase sol6. The solanapyrone synthase sol5 then catalyzes the oxidation of prosolanapyrone II and the subsequent Diels Alder cycloisomerization of the product prosolanapyrone III to solanapyrones A and D. Solanapyrones A and D are then converted into solanapyrones B and E, respectively, by the sol3 dehydrogenase. This Alternaria solani protein is Short chain dehydrogenase sol3 (sol3).